Here is a 372-residue protein sequence, read N- to C-terminus: G patch domain and ankyrin repeat-containing protein 1 (372 aa).

Positions 74–110 are disordered; the sequence is DSSSSKPQRAEPMRERKKKRRRVTREPAAAGVPRQGR. ANK repeat units follow at residues 124 to 155 and 156 to 186; these read LAAQNGDLTELRRLLEPQEAGGAGGNINARDA and FWWTPLMCAARAGQGAAVRYLLGRGAAWVGV. 2 disordered regions span residues 211–233 and 251–271; these read RESHGETRSPENQNRSTPSSSQF and AHLLSLSRRPQPSNLPLGVPT. A compositionally biased stretch (polar residues) spans 220-233; that stretch reads PENQNRSTPSSSQF. Residues 271–317 form the G-patch domain; sequence TSSPGFRLLLRGGWEPGMGLGPRGEGRANPIPTILKRDQEGLGYRSP. Lys306 participates in a covalent cross-link: Glycyl lysine isopeptide (Lys-Gly) (interchain with G-Cter in SUMO2). Basic and acidic residues-rich tracts occupy residues 330–340 and 348–357; these read TRAVSGRERVP and RENRRQEEKG. Positions 330–357 are disordered; sequence TRAVSGRERVPRVATLSQRENRRQEEKG.

This is G patch domain and ankyrin repeat-containing protein 1 (Gpank1) from Mus musculus (Mouse).